A 68-amino-acid polypeptide reads, in one-letter code: UPF0291 protein TTE2340 (68 aa).

The protein belongs to the UPF0291 family.

It is found in the cytoplasm. In Caldanaerobacter subterraneus subsp. tengcongensis (strain DSM 15242 / JCM 11007 / NBRC 100824 / MB4) (Thermoanaerobacter tengcongensis), this protein is UPF0291 protein TTE2340.